Here is a 285-residue protein sequence, read N- to C-terminus: Prephenate dehydratase (285 aa).

Residues 2–183 (KVGYLGPAAT…NHTRFVILSP (182 aa)) enclose the Prephenate dehydratase domain. In terms of domain architecture, ACT spans 204–281 (MVMLPQDDQS…CKVRLLGAYQ (78 aa)).

It carries out the reaction prephenate + H(+) = 3-phenylpyruvate + CO2 + H2O. It functions in the pathway amino-acid biosynthesis; L-phenylalanine biosynthesis; phenylpyruvate from prephenate: step 1/1. The protein is Prephenate dehydratase (pheA) of Bacillus subtilis (strain 168).